The following is a 331-amino-acid chain: UDP-xylose and UDP-N-acetylglucosamine transporter (331 aa).

A run of 10 helical transmembrane segments spans residues 5 to 25 (FAVT…ELLV), 30 to 50 (GCGN…GFIF), 59 to 79 (PQIP…VSVI), 92 to 112 (LHMI…IIIL), 122 to 142 (LSIV…AKQV), 153 to 173 (GVYA…ALLM), 201 to 221 (CLPL…AVLF), 238 to 260 (VMWF…VFIL), 267 to 289 (LTVT…LYFQ), and 301 to 321 (AVVF…PAAF).

It belongs to the nucleotide-sugar transporter family. SLC35B subfamily.

The protein localises to the golgi apparatus membrane. Sugar transporter that specifically mediates the transport of UDP-xylose (UDP-Xyl) and UDP-N-acetylglucosamine (UDP-GlcNAc) from cytosol into Golgi. This Danio rerio (Zebrafish) protein is UDP-xylose and UDP-N-acetylglucosamine transporter (slc35b4).